A 149-amino-acid polypeptide reads, in one-letter code: D-aminoacyl-tRNA deacylase (149 aa).

A Gly-cisPro motif, important for rejection of L-amino acids motif is present at residues 137–138 (GP).

The protein belongs to the DTD family. As to quaternary structure, homodimer.

It is found in the cytoplasm. The enzyme catalyses glycyl-tRNA(Ala) + H2O = tRNA(Ala) + glycine + H(+). The catalysed reaction is a D-aminoacyl-tRNA + H2O = a tRNA + a D-alpha-amino acid + H(+). In terms of biological role, an aminoacyl-tRNA editing enzyme that deacylates mischarged D-aminoacyl-tRNAs. Also deacylates mischarged glycyl-tRNA(Ala), protecting cells against glycine mischarging by AlaRS. Acts via tRNA-based rather than protein-based catalysis; rejects L-amino acids rather than detecting D-amino acids in the active site. By recycling D-aminoacyl-tRNA to D-amino acids and free tRNA molecules, this enzyme counteracts the toxicity associated with the formation of D-aminoacyl-tRNA entities in vivo and helps enforce protein L-homochirality. The protein is D-aminoacyl-tRNA deacylase of Clostridium beijerinckii (strain ATCC 51743 / NCIMB 8052) (Clostridium acetobutylicum).